A 753-amino-acid polypeptide reads, in one-letter code: 5-methyltetrahydropteroyltriglutamate--homocysteine methyltransferase (753 aa).

5-methyltetrahydropteroyltri-L-glutamate-binding positions include 17-20 and Lys-117; that span reads RELK. L-homocysteine contacts are provided by residues 431-433 and Glu-484; that span reads IGS. L-methionine is bound by residues 431–433 and Glu-484; that span reads IGS. Residues 515 to 516 and Trp-561 each bind 5-methyltetrahydropteroyltri-L-glutamate; that span reads RC. Asp-599 serves as a coordination point for L-homocysteine. Asp-599 lines the L-methionine pocket. Residue Glu-605 coordinates 5-methyltetrahydropteroyltri-L-glutamate. 3 residues coordinate Zn(2+): His-641, Cys-643, and Glu-665. Catalysis depends on His-694, which acts as the Proton donor. Cys-726 is a Zn(2+) binding site.

It belongs to the vitamin-B12 independent methionine synthase family. Zn(2+) serves as cofactor.

It catalyses the reaction 5-methyltetrahydropteroyltri-L-glutamate + L-homocysteine = tetrahydropteroyltri-L-glutamate + L-methionine. Its pathway is amino-acid biosynthesis; L-methionine biosynthesis via de novo pathway; L-methionine from L-homocysteine (MetE route): step 1/1. In terms of biological role, catalyzes the transfer of a methyl group from 5-methyltetrahydrofolate to homocysteine resulting in methionine formation. This Shigella boydii serotype 4 (strain Sb227) protein is 5-methyltetrahydropteroyltriglutamate--homocysteine methyltransferase.